The primary structure comprises 313 residues: Coproporphyrin III ferrochelatase (313 aa).

Fe(2+) contacts are provided by histidine 191 and glutamate 270.

It belongs to the ferrochelatase family.

The protein localises to the cytoplasm. It catalyses the reaction Fe-coproporphyrin III + 2 H(+) = coproporphyrin III + Fe(2+). Its pathway is porphyrin-containing compound metabolism; protoheme biosynthesis. Functionally, involved in coproporphyrin-dependent heme b biosynthesis. Catalyzes the insertion of ferrous iron into coproporphyrin III to form Fe-coproporphyrin III. This is Coproporphyrin III ferrochelatase from Enterococcus faecalis (strain ATCC 700802 / V583).